Reading from the N-terminus, the 327-residue chain is Aspartate--ammonia ligase (327 aa).

Belongs to the class-II aminoacyl-tRNA synthetase family. AsnA subfamily.

Its subcellular location is the cytoplasm. It carries out the reaction L-aspartate + NH4(+) + ATP = L-asparagine + AMP + diphosphate + H(+). It functions in the pathway amino-acid biosynthesis; L-asparagine biosynthesis; L-asparagine from L-aspartate (ammonia route): step 1/1. In Bacillus cytotoxicus (strain DSM 22905 / CIP 110041 / 391-98 / NVH 391-98), this protein is Aspartate--ammonia ligase.